Reading from the N-terminus, the 100-residue chain is NADH-quinone oxidoreductase subunit K 2 (100 aa).

The next 3 membrane-spanning stretches (helical) occupy residues leucine 4–isoleucine 24, isoleucine 28–alanine 48, and isoleucine 60–leucine 80.

This sequence belongs to the complex I subunit 4L family. In terms of assembly, NDH-1 is composed of 14 different subunits. Subunits NuoA, H, J, K, L, M, N constitute the membrane sector of the complex.

It is found in the cell inner membrane. It catalyses the reaction a quinone + NADH + 5 H(+)(in) = a quinol + NAD(+) + 4 H(+)(out). Its function is as follows. NDH-1 shuttles electrons from NADH, via FMN and iron-sulfur (Fe-S) centers, to quinones in the respiratory chain. The immediate electron acceptor for the enzyme in this species is believed to be ubiquinone. Couples the redox reaction to proton translocation (for every two electrons transferred, four hydrogen ions are translocated across the cytoplasmic membrane), and thus conserves the redox energy in a proton gradient. This is NADH-quinone oxidoreductase subunit K 2 from Rhizobium etli (strain ATCC 51251 / DSM 11541 / JCM 21823 / NBRC 15573 / CFN 42).